A 280-amino-acid chain; its full sequence is Nocamycin O-methyltransferase (280 aa).

It belongs to the methyltransferase superfamily.

The catalysed reaction is nocamycin E + S-adenosyl-L-methionine = nocamycin I + S-adenosyl-L-homocysteine. Its pathway is antibiotic biosynthesis. In terms of biological role, involved in the biosynthesis of nocamycin I and nocamycin II. Catalyzes the methylation of nocamycin E to yield nocamycin I. This chain is Nocamycin O-methyltransferase, found in Saccharothrix syringae (Nocardiopsis syringae).